Reading from the N-terminus, the 353-residue chain is Photosystem II protein D1 (353 aa).

Thr2 is subject to N-acetylthreonine. Thr2 is subject to Phosphothreonine. Helical transmembrane passes span 29–46 (YIGW…TATS), 118–133 (HFLL…EWEL), and 142–156 (WIAV…AATA). His118 contributes to the chlorophyll a binding site. Tyr126 is a binding site for pheophytin a. Asp170 and Glu189 together coordinate [CaMn4O5] cluster. A helical transmembrane segment spans residues 197 to 218 (FHMLGVAGVFGGSLFSAMHGSL). A chlorophyll a-binding site is contributed by His198. Residues His215 and 264–265 (SF) each bind a quinone. His215 lines the Fe cation pocket. His272 contributes to the Fe cation binding site. Residues 274-288 (FLAAWPVVGIWFTAL) form a helical membrane-spanning segment. [CaMn4O5] cluster is bound by residues His332, Glu333, Asp342, and Ala344. A propeptide spanning residues 345-353 (AVEVPAING) is cleaved from the precursor.

This sequence belongs to the reaction center PufL/M/PsbA/D family. In terms of assembly, PSII is composed of 1 copy each of membrane proteins PsbA, PsbB, PsbC, PsbD, PsbE, PsbF, PsbH, PsbI, PsbJ, PsbK, PsbL, PsbM, PsbT, PsbX, PsbY, PsbZ, Psb30/Ycf12, at least 3 peripheral proteins of the oxygen-evolving complex and a large number of cofactors. It forms dimeric complexes. The D1/D2 heterodimer binds P680, chlorophylls that are the primary electron donor of PSII, and subsequent electron acceptors. It shares a non-heme iron and each subunit binds pheophytin, quinone, additional chlorophylls, carotenoids and lipids. D1 provides most of the ligands for the Mn4-Ca-O5 cluster of the oxygen-evolving complex (OEC). There is also a Cl(-1) ion associated with D1 and D2, which is required for oxygen evolution. The PSII complex binds additional chlorophylls, carotenoids and specific lipids. serves as cofactor. Tyr-161 forms a radical intermediate that is referred to as redox-active TyrZ, YZ or Y-Z. In terms of processing, C-terminally processed by CTPA; processing is essential to allow assembly of the oxygen-evolving complex and thus photosynthetic growth.

It is found in the plastid. The protein localises to the chloroplast thylakoid membrane. The catalysed reaction is 2 a plastoquinone + 4 hnu + 2 H2O = 2 a plastoquinol + O2. Functionally, photosystem II (PSII) is a light-driven water:plastoquinone oxidoreductase that uses light energy to abstract electrons from H(2)O, generating O(2) and a proton gradient subsequently used for ATP formation. It consists of a core antenna complex that captures photons, and an electron transfer chain that converts photonic excitation into a charge separation. The D1/D2 (PsbA/PsbD) reaction center heterodimer binds P680, the primary electron donor of PSII as well as several subsequent electron acceptors. This is Photosystem II protein D1 from Hordeum vulgare (Barley).